The chain runs to 321 residues: Beta-ketoacyl-[acyl-carrier-protein] synthase III (321 aa).

Catalysis depends on residues cysteine 115 and histidine 248. Residues 249 to 253 are ACP-binding; that stretch reads QANIR. Asparagine 278 is a catalytic residue.

This sequence belongs to the thiolase-like superfamily. FabH family. As to quaternary structure, homodimer.

The protein localises to the cytoplasm. It catalyses the reaction malonyl-[ACP] + acetyl-CoA + H(+) = 3-oxobutanoyl-[ACP] + CO2 + CoA. The protein operates within lipid metabolism; fatty acid biosynthesis. Functionally, catalyzes the condensation reaction of fatty acid synthesis by the addition to an acyl acceptor of two carbons from malonyl-ACP. Catalyzes the first condensation reaction which initiates fatty acid synthesis and may therefore play a role in governing the total rate of fatty acid production. Possesses both acetoacetyl-ACP synthase and acetyl transacylase activities. Its substrate specificity determines the biosynthesis of branched-chain and/or straight-chain of fatty acids. The chain is Beta-ketoacyl-[acyl-carrier-protein] synthase III from Aromatoleum aromaticum (strain DSM 19018 / LMG 30748 / EbN1) (Azoarcus sp. (strain EbN1)).